The primary structure comprises 76 residues: Large ribosomal subunit protein bL31 (76 aa).

It belongs to the bacterial ribosomal protein bL31 family. Type A subfamily. As to quaternary structure, part of the 50S ribosomal subunit.

Functionally, binds the 23S rRNA. The chain is Large ribosomal subunit protein bL31 from Gluconacetobacter diazotrophicus (strain ATCC 49037 / DSM 5601 / CCUG 37298 / CIP 103539 / LMG 7603 / PAl5).